The following is a 787-amino-acid chain: Protein translocase subunit SecA (787 aa).

Residues Gln85, 103–107 (GEGKT), and Asp492 contribute to the ATP site.

Belongs to the SecA family. As to quaternary structure, monomer and homodimer. Part of the essential Sec protein translocation apparatus which comprises SecA, SecYEG and auxiliary proteins SecDF. Other proteins may also be involved.

The protein resides in the cell membrane. Its subcellular location is the cytoplasm. It catalyses the reaction ATP + H2O + cellular proteinSide 1 = ADP + phosphate + cellular proteinSide 2.. In terms of biological role, part of the Sec protein translocase complex. Interacts with the SecYEG preprotein conducting channel. Has a central role in coupling the hydrolysis of ATP to the transfer of proteins into and across the cell membrane, serving as an ATP-driven molecular motor driving the stepwise translocation of polypeptide chains across the membrane. The chain is Protein translocase subunit SecA from Lacticaseibacillus casei (strain BL23) (Lactobacillus casei).